The chain runs to 205 residues: Cytochrome c biogenesis ATP-binding export protein CcmA 1 (205 aa).

One can recognise an ABC transporter domain in the interval 2 to 205; it reads LEARDLYCER…LALTGGGAGL (204 aa). 34 to 41 is a binding site for ATP; the sequence is GGNGAGKT.

Belongs to the ABC transporter superfamily. CcmA exporter (TC 3.A.1.107) family. The complex is composed of two ATP-binding proteins (CcmA) and two transmembrane proteins (CcmB).

The protein localises to the cell inner membrane. It catalyses the reaction heme b(in) + ATP + H2O = heme b(out) + ADP + phosphate + H(+). Part of the ABC transporter complex CcmAB involved in the biogenesis of c-type cytochromes; once thought to export heme, this seems not to be the case, but its exact role is uncertain. Responsible for energy coupling to the transport system. This Salmonella typhimurium (strain LT2 / SGSC1412 / ATCC 700720) protein is Cytochrome c biogenesis ATP-binding export protein CcmA 1.